Reading from the N-terminus, the 435-residue chain is Nucleoredoxin (435 aa).

Ser-2 carries the N-acetylserine modification. Residues 167–321 (PKPFREVIAG…VLELSDSNAV (155 aa)) form the Thioredoxin domain.

The protein belongs to the nucleoredoxin family. As to quaternary structure, associates with the phosphatase 2A holoenzyme. Interacts with PPP2CA; the interaction is direct. Interacts with DVL1 (via PDZ domain); the interaction is direct and regulated by oxidative stress.

It is found in the cytoplasm. The protein resides in the cytosol. Its subcellular location is the nucleus. It carries out the reaction [protein]-dithiol + NAD(+) = [protein]-disulfide + NADH + H(+). The enzyme catalyses [protein]-dithiol + NADP(+) = [protein]-disulfide + NADPH + H(+). In terms of biological role, functions as a redox-dependent negative regulator of the Wnt signaling pathway, possibly by preventing ubiquitination of DVL3 by the BCR(KLHL12) complex. May also function as a transcriptional regulator act as a regulator of protein phosphatase 2A (PP2A). The sequence is that of Nucleoredoxin (NXN) from Bos taurus (Bovine).